Consider the following 381-residue polypeptide: Alkanesulfonate monooxygenase (381 aa).

It belongs to the SsuD family. In terms of assembly, homotetramer.

It carries out the reaction an alkanesulfonate + FMNH2 + O2 = an aldehyde + FMN + sulfite + H2O + 2 H(+). Catalyzes the desulfonation of aliphatic sulfonates. The chain is Alkanesulfonate monooxygenase from Escherichia coli (strain SMS-3-5 / SECEC).